Here is a 580-residue protein sequence, read N- to C-terminus: Type 3 secretion system translocon protein SctE (580 aa).

IpgC chaperone binding domain stretches follow at residues K15–L45 and I51–S72. Residues N61–P70 are mediates interaction with human MAD2L2. Residues A104–F224 adopt a coiled-coil conformation. 2 helical membrane passes run I313–S333 and I399–V419.

The protein belongs to the SctE/SipB/YopB family. The core secretion machinery of the T3SS is composed of approximately 20 different proteins, including cytoplasmic components, a base, an export apparatus and a needle. This subunit is involved in the formation of a pore, called the translocon, in host membrane. Interacts with IpaC/SctB. Interacts with the needle tip protein IpaD/SctA. Interacts with the molecular chaperone IpgC, which prevents premature association with IpaC/SctB within the cytoplasm of Shigella cells and protects IpaB/SctE from proteolysis. Interacts with the host protein ICE in the cytoplasm of infected macrophages. Interacts with human MAD2L2 in the G2/M phase of the cell cycle.

It is found in the secreted. The protein resides in the host membrane. It localises to the host cell. The protein localises to the host nucleus. Its activity is regulated as follows. Interaction with the membrane is affected by the pH. IpaB/SctE is more efficient in destabilizing the membrane at pH 5.0 than at neutral pH. In terms of biological role, component of the type III secretion system (T3SS), also called injectisome, which is used to inject bacterial effector proteins into eukaryotic host cells. IpaB/SctE and IpaC/SctB are inserted into the host membrane where they form a pore and allow the translocation of effector proteins into the cytosol of target cells. Interaction with IpaD/SctA at needle tips leads to the formation of the MxiH/SctF-IpaD/SctA-IpaB/SctE ternary complex, which is essential for host cell sensing. Interaction of IpaB/SctE with host membrane lipids promotes recruitment of IpaC/SctB at the needle tip concomitant with translocon insertion into the host membrane and type III secretion induction. Functionally, required for efficient dissemination. Necessary for lysis of the two cellular membranes that surround bacteria in protrusions during cell-to-cell spread. Is sufficient to induce macrophage apoptosis through activation of the interleukin-1 beta converting enzyme (ICE) in infected macrophages. In epithelial cells, causes cell-cycle arrest by targeting host MAD2L2, an anaphase-promoting complex/cyclosome (APC) inhibitor. This Shigella flexneri protein is Type 3 secretion system translocon protein SctE.